The following is a 23-amino-acid chain: Caerulein precursor fragment R6 (23 aa).

In terms of tissue distribution, expressed by the skin glands.

The protein resides in the secreted. Antimicrobial peptide. In Xenopus ruwenzoriensis (Uganda clawed frog), this protein is Caerulein precursor fragment R6.